Here is a 487-residue protein sequence, read N- to C-terminus: Adenylosuccinate synthetase, chloroplastic (487 aa).

The transit peptide at 1–46 (MSLSTVNHAAAAAAAAGSGKSFSAAAPAAPSVRLPRTRAPAAAAVS) directs the protein to the chloroplast. Residues 74–80 (GDEGKGK) and 102–104 (GHT) contribute to the GTP site. The Proton acceptor role is filled by aspartate 75. Residues aspartate 75 and glycine 102 each coordinate Mg(2+). Residues 75–78 (DEGK), 100–103 (NAGH), threonine 192, arginine 206, glutamine 286, threonine 301, and arginine 365 contribute to the IMP site. Residue histidine 103 is the Proton donor of the active site. Substrate is bound at residue 361 to 367 (TTTGRPR). GTP is bound by residues arginine 367, 393–395 (KLD), and 476–478 (GVG).

Belongs to the adenylosuccinate synthetase family. Homodimer. Mg(2+) serves as cofactor.

It localises to the plastid. It is found in the chloroplast. It catalyses the reaction IMP + L-aspartate + GTP = N(6)-(1,2-dicarboxyethyl)-AMP + GDP + phosphate + 2 H(+). Its pathway is purine metabolism; AMP biosynthesis via de novo pathway; AMP from IMP: step 1/2. In terms of biological role, plays an important role in the de novo pathway and in the salvage pathway of purine nucleotide biosynthesis. Catalyzes the first committed step in the biosynthesis of AMP from IMP. The polypeptide is Adenylosuccinate synthetase, chloroplastic (Oryza sativa subsp. indica (Rice)).